The chain runs to 742 residues: 2'-5'-oligoadenylate synthase 2 (742 aa).

The interval Met-1–His-35 is disordered. Residue Gly-2 is the site of N-myristoyl glycine attachment. Over residues Ser-10 to Trp-21 the composition is skewed to low complexity. OAS domain stretches follow at residues Val-60–Val-374 and Thr-382–Pro-721. N6-acetyllysine is present on Lys-417. Ser-436 contributes to the ATP binding site. Positions 448, 450, and 519 each coordinate Mg(2+). The ATP site is built by Arg-582 and Lys-585.

The protein belongs to the 2-5A synthase family. Homodimer. It depends on Mg(2+) as a cofactor. Post-translationally, myristoylation is not essential for its activity. In terms of processing, glycosylated. Glycosylation is essential for its activity. As to expression, expressed in the uterus. Expressed in mammary glands: expressed at low level before the establishment of lactation, then expression strongly increases, and subsequently decreases during early involution.

It is found in the cytoplasm. It localises to the perinuclear region. It carries out the reaction 3 ATP = 5'-triphosphoadenylyl-(2'-&gt;5')-adenylyl-(2'-&gt;5')-adenosine + 2 diphosphate. Its activity is regulated as follows. Produced as a latent enzyme which is activated by double stranded RNA (dsRNA) generated during the course of viral infection. The dsRNA activator must be at least 15 nucleotides long, and no modification of the 2'-hydroxyl group is tolerated. ssRNA or dsDNA do not act as activators. Strongly inhibited by copper, iron and zinc ions. Partially inhibited by cobalt and nickel ions. Interferon-induced, dsRNA-activated antiviral enzyme which plays a critical role in cellular innate antiviral response. Activated by detection of double stranded RNA (dsRNA): polymerizes higher oligomers of 2'-5'-oligoadenylates (2-5A) from ATP which then bind to the inactive monomeric form of ribonuclease L (RNASEL) leading to its dimerization and subsequent activation. Activation of RNASEL leads to degradation of cellular as well as viral RNA, resulting in the inhibition of protein synthesis, thus terminating viral replication. Can mediate the antiviral effect via the classical RNASEL-dependent pathway or an alternative antiviral pathway independent of RNASEL. In addition, it may also play a role in other cellular processes such as apoptosis, cell growth, differentiation and gene regulation. May act as a negative regulator of lactation, stopping lactation in virally infected mammary gland lobules, thereby preventing transmission of viruses to neonates. Non-infected lobules would not be affected, allowing efficient pup feeding during infection. The chain is 2'-5'-oligoadenylate synthase 2 from Mus musculus (Mouse).